The primary structure comprises 602 residues: Proteasome-associated ATPase (602 aa).

Over residues M1–A13 the composition is skewed to basic and acidic residues. The disordered stretch occupies residues M1 to R33. Over residues T23–A32 the composition is skewed to polar residues. Residues S28–Q103 adopt a coiled-coil conformation. Residue G291–L296 participates in ATP binding. Residues Y601 to L602 form a docks into pockets in the proteasome alpha-ring region.

This sequence belongs to the AAA ATPase family. As to quaternary structure, homohexamer. Assembles into a hexameric ring structure that caps the 20S proteasome core. Strongly interacts with the prokaryotic ubiquitin-like protein Pup through a hydrophobic interface; the interacting region of ARC lies in its N-terminal coiled-coil domain. There is one Pup binding site per ARC hexamer ring. Upon ATP-binding, the C-terminus of ARC interacts with the alpha-rings of the proteasome core, possibly by binding to the intersubunit pockets.

Its pathway is protein degradation; proteasomal Pup-dependent pathway. Functionally, ATPase which is responsible for recognizing, binding, unfolding and translocation of pupylated proteins into the bacterial 20S proteasome core particle. May be essential for opening the gate of the 20S proteasome via an interaction with its C-terminus, thereby allowing substrate entry and access to the site of proteolysis. Thus, the C-termini of the proteasomal ATPase may function like a 'key in a lock' to induce gate opening and therefore regulate proteolysis. This is Proteasome-associated ATPase from Saccharomonospora viridis (strain ATCC 15386 / DSM 43017 / JCM 3036 / CCUG 5913 / NBRC 12207 / NCIMB 9602 / P101) (Thermoactinomyces viridis).